We begin with the raw amino-acid sequence, 100 residues long: NADH-quinone oxidoreductase subunit K (100 aa).

3 consecutive transmembrane segments (helical) span residues 4 to 24, 28 to 48, and 60 to 80; these read LQHGLILAAILFALGLTGLLI, LLFMLISLEIMINAAALAFVV, and VMYILAISLAAAEASIGLALL.

The protein belongs to the complex I subunit 4L family. As to quaternary structure, NDH-1 is composed of 13 different subunits. Subunits NuoA, H, J, K, L, M, N constitute the membrane sector of the complex.

The protein localises to the cell inner membrane. The catalysed reaction is a quinone + NADH + 5 H(+)(in) = a quinol + NAD(+) + 4 H(+)(out). Its function is as follows. NDH-1 shuttles electrons from NADH, via FMN and iron-sulfur (Fe-S) centers, to quinones in the respiratory chain. The immediate electron acceptor for the enzyme in this species is believed to be ubiquinone. Couples the redox reaction to proton translocation (for every two electrons transferred, four hydrogen ions are translocated across the cytoplasmic membrane), and thus conserves the redox energy in a proton gradient. In Edwardsiella ictaluri (strain 93-146), this protein is NADH-quinone oxidoreductase subunit K.